We begin with the raw amino-acid sequence, 820 residues long: G-type lectin S-receptor-like serine/threonine-protein kinase At1g11300 (820 aa).

The N-terminal stretch at 1-26 (MRLHESSSPFVCILVLSCFFLSVSLA) is a signal peptide. Residues 27–150 (QERAFFSGKL…SSDAYLWESF (124 aa)) form the Bulb-type lectin domain. Residues 27–436 (QERAFFSGKL…SEIKTKDKRP (410 aa)) are Extracellular-facing. N-linked (GlcNAc...) asparagine glycans are attached at residues Asn-37, Asn-58, Asn-87, Asn-115, Asn-123, Asn-173, Asn-211, Asn-247, Asn-256, and Asn-282. Positions 290-326 (PATECDNYRRCGEFATCNPRKNPLCSCIRGFRPRNLI) constitute an EGF-like; atypical domain. Intrachain disulfides connect Cys-294–Cys-306 and Cys-300–Cys-314. Asn-332 and Asn-351 each carry an N-linked (GlcNAc...) asparagine glycan. Residues 345–425 (CERQNNNGSA…SGLDLYIRLA (81 aa)) form the PAN domain. 2 cysteine pairs are disulfide-bonded: Cys-379/Cys-400 and Cys-383/Cys-389. Asn-404 carries an N-linked (GlcNAc...) asparagine glycan. A helical membrane pass occupies residues 437-457 (ILIGTILAGGIFVVAACVLLA). Topologically, residues 458 to 820 (RRIVMKKRAK…NVTITDVTGR (363 aa)) are cytoplasmic. The Protein kinase domain maps to 509-788 (FSLRNKLGQG…DIPEPKQPAF (280 aa)). Residues 515–523 (LGQGGFGPV) and Lys-537 contribute to the ATP site. Positions 598–615 (RRAKLLDWKTRFNIINGI) are caM-binding. Asp-634 acts as the Proton acceptor in catalysis.

The protein belongs to the protein kinase superfamily. Ser/Thr protein kinase family.

Its subcellular location is the cell membrane. The enzyme catalyses L-seryl-[protein] + ATP = O-phospho-L-seryl-[protein] + ADP + H(+). The catalysed reaction is L-threonyl-[protein] + ATP = O-phospho-L-threonyl-[protein] + ADP + H(+). In Arabidopsis thaliana (Mouse-ear cress), this protein is G-type lectin S-receptor-like serine/threonine-protein kinase At1g11300.